The following is a 240-amino-acid chain: Bidirectional sugar transporter SWEET7c (240 aa).

Residues 1 to 12 (MVSPDLIRNVVG) lie on the Extracellular side of the membrane. In terms of domain architecture, MtN3/slv 1 spans 10–48 (VVGIVGNVISFGLFLSPVPIFWWIIKNKNVQNFKADPIL). A helical transmembrane segment spans residues 13-33 (IVGNVISFGLFLSPVPIFWWI). Residues 34 to 46 (IKNKNVQNFKADP) are Cytoplasmic-facing. Residues 47–67 (ILVVTINGISLVIEAVYLTIF) form a helical membrane-spanning segment. The Extracellular segment spans residues 68–78 (FLFSDKKNKKK). Residues 79–99 (MGVVLATEALFMAAVAVGVLL) traverse the membrane as a helical segment. Residues 100-108 (GAHTHQRRS) lie on the Cytoplasmic side of the membrane. A helical membrane pass occupies residues 109–129 (LIVGILCVIFGTIMYSSPLTI). In terms of domain architecture, MtN3/slv 2 spans 110–191 (IVGILCVIFG…LILYAIYYRT (82 aa)). Topologically, residues 130–140 (MVVKTKSVEYM) are extracellular. A helical transmembrane segment spans residues 141-161 (PLLLSVVSFLNGLCWTLYALI). At 162 to 164 (RFD) the chain is on the cytoplasmic side. The helical transmembrane segment at 165-185 (IFITIPNGLGVLFAIMQLILY) threads the bilayer. Over 186-240 (AIYYRTTPKKQDKNLELPTVAPIAKDTSIVAPVGNDDDVNGSTASHATINITIEP) the chain is Extracellular. N-linked (GlcNAc...) asparagine glycosylation is found at Asn-225 and Asn-235.

Belongs to the SWEET sugar transporter family. Forms homooligomers and/or heterooligomers.

Its subcellular location is the cell membrane. In terms of biological role, mediates both low-affinity uptake and efflux of sugar across the plasma membrane. This Oryza sativa subsp. indica (Rice) protein is Bidirectional sugar transporter SWEET7c (SWEET7C).